Consider the following 481-residue polypeptide: UDP-glycosyltransferase 72E3 (481 aa).

The active-site Proton acceptor is the His18. His18 is a binding site for an anthocyanidin. Asp111 functions as the Charge relay in the catalytic mechanism. 6 residues coordinate UDP-alpha-D-glucose: Ala346, Gln348, His363, Trp366, Ser368, and Glu371. Position 386 (Ala386) interacts with an anthocyanidin. Positions 387 and 388 each coordinate UDP-alpha-D-glucose.

Belongs to the UDP-glycosyltransferase family. As to expression, expressed in seedlings and roots, and at lower levels in flowers and siliques.

The enzyme catalyses (E)-4-coumarate + UDP-alpha-D-glucose = 4-O-(beta-D-glucosyl)-trans-4-coumarate + UDP + H(+). It carries out the reaction (E)-sinapyl alcohol + UDP-alpha-D-glucose = 4-O-(beta-D-glucosyl)-trans-4-sinapoyl alcohol + UDP + H(+). It catalyses the reaction (E)-coniferol + UDP-alpha-D-glucose = 4-O-(beta-D-glucosyl)-(E)-coniferol + UDP + H(+). The catalysed reaction is (E)-sinapate + UDP-alpha-D-glucose = 4-O-(beta-D-glucosyl)-trans-sinapate + UDP + H(+). The enzyme catalyses (E)-coniferaldehyde + UDP-alpha-D-glucose = 4-O-(beta-D-glucosyl)-4-(E)-coniferyl aldehyde + UDP + H(+). It carries out the reaction (E)-sinapaldehyde + UDP-alpha-D-glucose = 4-O-(beta-D-glucosyl)-4-trans-sinapoyl aldehyde + UDP + H(+). In terms of biological role, involved in the O-glucosylation of monolignols (alcohol monomers of lignin). Glucosylates coniferyl alcohol to form coniferyl alcohol 4-O-glucoside. Glucosylates sinapyl alcohol to form sinapyl alcohol 4-O-glucoside. Possesses low activity with sinapate as substrate. The chain is UDP-glycosyltransferase 72E3 from Arabidopsis thaliana (Mouse-ear cress).